We begin with the raw amino-acid sequence, 268 residues long: Hydroxypyruvate/pyruvate aldolase (268 aa).

The Proton acceptor role is filled by His48. The a divalent metal cation site is built by Glu152 and Asp178.

The protein belongs to the HpcH/HpaI aldolase family. Mn(2+) is required as a cofactor. It depends on Mg(2+) as a cofactor. The cofactor is Co(2+).

The catalysed reaction is D-glyceraldehyde + 3-hydroxypyruvate = (3R,4S,5R)-3,4,5,6-tetrahydroxy-2-oxohexanoate. The enzyme catalyses D-glyceraldehyde + 3-hydroxypyruvate = 2-dehydro-D-gluconate. It catalyses the reaction D-glyceraldehyde + 3-hydroxypyruvate = 2-dehydro-D-galactonate. It carries out the reaction D-glyceraldehyde + pyruvate = 2-dehydro-3-deoxy-L-galactonate. The catalysed reaction is 2-dehydro-3-deoxy-D-gluconate = D-glyceraldehyde + pyruvate. Functionally, aldolase which can catalyze in vitro the aldolisation reaction between hydroxypyruvate (HPA) or pyruvate (PA) and D-glyceraldehyde (D-GA). The condensation of hydroxypyruvate and D-glyceraldehyde produces (3R,4S,5R)-3,4,5,6-tetrahydroxy-2-oxohexanoate as the major product, 2-dehydro-D-gluconate and 2-dehydro-D-galactonate. The condensation of pyruvate and D-glyceraldehyde produces 2-dehydro-3-deoxy-L-galactonate as the major product and 2-dehydro-3-deoxy-D-gluconate. Also catalyzes the retro-aldol type decarboxylation of oxaloacetate, a general property of known pyruvate aldolases. This is Hydroxypyruvate/pyruvate aldolase from Pseudomonas aeruginosa.